Consider the following 340-residue polypeptide: DNA-directed RNA polymerase subunit alpha (340 aa).

Positions 1 to 236 (MLSLSKNWNT…EQLQLFISFE (236 aa)) are alpha N-terminal domain (alpha-NTD). The tract at residues 246 to 340 (TDALPFSPYL…LSNRYEDSYN (95 aa)) is alpha C-terminal domain (alpha-CTD).

The protein belongs to the RNA polymerase alpha chain family. As to quaternary structure, homodimer. The RNAP catalytic core consists of 2 alpha, 1 beta, 1 beta' and 1 omega subunit. When a sigma factor is associated with the core the holoenzyme is formed, which can initiate transcription.

It catalyses the reaction RNA(n) + a ribonucleoside 5'-triphosphate = RNA(n+1) + diphosphate. In terms of biological role, DNA-dependent RNA polymerase catalyzes the transcription of DNA into RNA using the four ribonucleoside triphosphates as substrates. This Rickettsia felis (strain ATCC VR-1525 / URRWXCal2) (Rickettsia azadi) protein is DNA-directed RNA polymerase subunit alpha.